Consider the following 399-residue polypeptide: S-adenosylmethionine synthase (399 aa).

Residue histidine 17 coordinates ATP. Residue aspartate 19 coordinates Mg(2+). Residue glutamate 45 coordinates K(+). L-methionine-binding residues include glutamate 58 and glutamine 101. Residues 101–111 (QSADIAMGVDQ) are flexible loop. Residues 177–179 (DGK), 244–245 (RF), aspartate 253, 259–260 (RK), alanine 276, and lysine 280 contribute to the ATP site. Residue aspartate 253 participates in L-methionine binding. Lysine 284 is an L-methionine binding site.

The protein belongs to the AdoMet synthase family. In terms of assembly, homotetramer; dimer of dimers. Requires Mg(2+) as cofactor. K(+) serves as cofactor.

Its subcellular location is the cytoplasm. The catalysed reaction is L-methionine + ATP + H2O = S-adenosyl-L-methionine + phosphate + diphosphate. Its pathway is amino-acid biosynthesis; S-adenosyl-L-methionine biosynthesis; S-adenosyl-L-methionine from L-methionine: step 1/1. Catalyzes the formation of S-adenosylmethionine (AdoMet) from methionine and ATP. The overall synthetic reaction is composed of two sequential steps, AdoMet formation and the subsequent tripolyphosphate hydrolysis which occurs prior to release of AdoMet from the enzyme. The protein is S-adenosylmethionine synthase of Bacillus thuringiensis (strain Al Hakam).